The following is a 454-amino-acid chain: Bifunctional protein GlmU (454 aa).

Residues 1-226 (MSLEIVILAA…AMEVQGVNDR (226 aa)) are pyrophosphorylase. UDP-N-acetyl-alpha-D-glucosamine-binding positions include 8–11 (LAAG), K22, Q73, 78–79 (GT), 99–101 (YGD), G136, E151, N166, and N224. Residue D101 participates in Mg(2+) binding. Mg(2+) is bound at residue N224. The segment at 227-247 (MQQAQLERHYQRLRAEELMRQ) is linker. Positions 248–454 (GVTLLDPQRL…NWKRPEKIKK (207 aa)) are N-acetyltransferase. UDP-N-acetyl-alpha-D-glucosamine contacts are provided by R330 and K348. Residue H360 is the Proton acceptor of the active site. Residues Y363 and N374 each contribute to the UDP-N-acetyl-alpha-D-glucosamine site. Acetyl-CoA-binding positions include A377, 383-384 (NY), S402, A420, and R437.

It in the N-terminal section; belongs to the N-acetylglucosamine-1-phosphate uridyltransferase family. The protein in the C-terminal section; belongs to the transferase hexapeptide repeat family. In terms of assembly, homotrimer. Mg(2+) serves as cofactor.

It is found in the cytoplasm. It carries out the reaction alpha-D-glucosamine 1-phosphate + acetyl-CoA = N-acetyl-alpha-D-glucosamine 1-phosphate + CoA + H(+). It catalyses the reaction N-acetyl-alpha-D-glucosamine 1-phosphate + UTP + H(+) = UDP-N-acetyl-alpha-D-glucosamine + diphosphate. Its pathway is nucleotide-sugar biosynthesis; UDP-N-acetyl-alpha-D-glucosamine biosynthesis; N-acetyl-alpha-D-glucosamine 1-phosphate from alpha-D-glucosamine 6-phosphate (route II): step 2/2. The protein operates within nucleotide-sugar biosynthesis; UDP-N-acetyl-alpha-D-glucosamine biosynthesis; UDP-N-acetyl-alpha-D-glucosamine from N-acetyl-alpha-D-glucosamine 1-phosphate: step 1/1. It participates in bacterial outer membrane biogenesis; LPS lipid A biosynthesis. Functionally, catalyzes the last two sequential reactions in the de novo biosynthetic pathway for UDP-N-acetylglucosamine (UDP-GlcNAc). The C-terminal domain catalyzes the transfer of acetyl group from acetyl coenzyme A to glucosamine-1-phosphate (GlcN-1-P) to produce N-acetylglucosamine-1-phosphate (GlcNAc-1-P), which is converted into UDP-GlcNAc by the transfer of uridine 5-monophosphate (from uridine 5-triphosphate), a reaction catalyzed by the N-terminal domain. The sequence is that of Bifunctional protein GlmU from Pseudomonas aeruginosa (strain ATCC 15692 / DSM 22644 / CIP 104116 / JCM 14847 / LMG 12228 / 1C / PRS 101 / PAO1).